Consider the following 806-residue polypeptide: Leucine--tRNA ligase (806 aa).

The short motif at Pro38–His48 is the 'HIGH' region element. The 'KMSKS' region signature appears at Lys572–Ser576. An ATP-binding site is contributed by Lys575.

The protein belongs to the class-I aminoacyl-tRNA synthetase family.

It is found in the cytoplasm. The enzyme catalyses tRNA(Leu) + L-leucine + ATP = L-leucyl-tRNA(Leu) + AMP + diphosphate. In Helicobacter acinonychis (strain Sheeba), this protein is Leucine--tRNA ligase.